Reading from the N-terminus, the 261-residue chain is MEVIILPDPGRIGSLAADAITALITRKPDAVLGLATGSSPLAVYDELVSRYEAGQISFRQARGFTLDEYVGLPADHPERYRNVIDTAFAARVDFAPGAVQGPDGLADDIPAACAAYEAAIRDAGGVDLQILGIGTDGHIAFNEPGSSLASRTRIKTLTRQTRVDNARFFGGDLDQVPTHCLTQGLGTIMEARHLILIAMGRSKAEAVHHLVEGAVSAMWPATVLQMHPHVTVLLDDAAAQRLQLVDYYRETYRAKPAWQGI.

Aspartate 67 functions as the Proton acceptor; for enolization step in the catalytic mechanism. Aspartate 136 (for ring-opening step) is an active-site residue. The Proton acceptor; for ring-opening step role is filled by histidine 138. The active-site For ring-opening step is glutamate 143.

Belongs to the glucosamine/galactosamine-6-phosphate isomerase family. NagB subfamily.

It carries out the reaction alpha-D-glucosamine 6-phosphate + H2O = beta-D-fructose 6-phosphate + NH4(+). It participates in amino-sugar metabolism; N-acetylneuraminate degradation; D-fructose 6-phosphate from N-acetylneuraminate: step 5/5. Functionally, catalyzes the reversible isomerization-deamination of glucosamine 6-phosphate (GlcN6P) to form fructose 6-phosphate (Fru6P) and ammonium ion. In Mycolicibacterium smegmatis (strain ATCC 700084 / mc(2)155) (Mycobacterium smegmatis), this protein is Glucosamine-6-phosphate deaminase.